Reading from the N-terminus, the 156-residue chain is 3-dehydroquinate dehydratase (156 aa).

Tyr24 serves as the catalytic Proton acceptor. Substrate contacts are provided by Asn76, His82, and Asp89. Residue His102 is the Proton donor of the active site. Substrate is bound by residues 103–104 (IS) and Arg113.

Belongs to the type-II 3-dehydroquinase family. As to quaternary structure, homododecamer.

The enzyme catalyses 3-dehydroquinate = 3-dehydroshikimate + H2O. It functions in the pathway metabolic intermediate biosynthesis; chorismate biosynthesis; chorismate from D-erythrose 4-phosphate and phosphoenolpyruvate: step 3/7. Its function is as follows. Catalyzes a trans-dehydration via an enolate intermediate. The sequence is that of 3-dehydroquinate dehydratase from Nitrobacter winogradskyi (strain ATCC 25391 / DSM 10237 / CIP 104748 / NCIMB 11846 / Nb-255).